The primary structure comprises 224 residues: Mammalian ependymin-related protein 1 (224 aa).

The first 37 residues, 1 to 37 (MPGRAPLRTVPGALGAWLLGGLWAWTLCGLCSLGAVG), serve as a signal peptide directing secretion. Cystine bridges form between cysteine 42/cysteine 172, cysteine 88/cysteine 222, and cysteine 113/cysteine 210. Residues asparagine 130 and asparagine 182 are each glycosylated (N-linked (GlcNAc...) asparagine).

It belongs to the ependymin family. In terms of assembly, homodimer. N-glycosylated; the glycan contains mannose-6-phosphate moieties. In terms of tissue distribution, ubiquitous. Detected in brain, heart, skeletal muscle, kidney, testis, ovary and prostate.

It localises to the lysosome lumen. Its subcellular location is the secreted. Its function is as follows. Binds anionic lipids and gangliosides at acidic pH. The protein is Mammalian ependymin-related protein 1 (EPDR1) of Homo sapiens (Human).